The chain runs to 463 residues: Xanthine permease XanP (463 aa).

A run of 12 helical transmembrane segments spans residues 43 to 63, 71 to 91, 93 to 113, 126 to 146, 156 to 176, 192 to 212, 222 to 242, 260 to 280, 352 to 372, 379 to 399, 409 to 429, and 439 to 459; these read LLAMFVAVITPALLICQALGL, IISMSLFASGVASIIQIKAWG, VGSGLLSIQGTSFNFVAPLIM, PTMMAALFGTLMLASCTEMVI, IITPLVSGVVVMIIGLSLIQV, TFGAPKNLLLAGVVLALIILL, VASLVIAMAAGYALAWFMGML, LYYGLGIEWSLLLPLMLVFMI, GFVVALMLIVLGLFPAVSGFV, VLGGATLVMFGTIAASGVRIV, ILIIALSLAVGLGVSQQPLIL, and LLSSGIAAGGITAIVLNLIFP.

The protein belongs to the nucleobase:cation symporter-2 (NCS2) (TC 2.A.40) family.

The protein localises to the cell inner membrane. It carries out the reaction xanthine(in) + H(+)(in) = xanthine(out) + H(+)(out). Its function is as follows. Specific, proton motive force-dependent high-affinity transporter for xanthine. This chain is Xanthine permease XanP (xanP), found in Escherichia coli O6:H1 (strain CFT073 / ATCC 700928 / UPEC).